The following is an 80-amino-acid chain: Toxin Acra1 (80 aa).

The first 22 residues, 1–22 (MMKLVLFSIIVILFSLIGSIHG), serve as a signal peptide directing secretion. The LCN-type CS-alpha/beta domain occupies 25–80 (VPGNYPLDSSGNKYPCTVLGDNQSCIDVCKKHGVKYGYCYSFKCWCEFLEDKNVSI). 3 cysteine pairs are disulfide-bonded: cysteine 40-cysteine 63, cysteine 49-cysteine 68, and cysteine 53-cysteine 70.

Expressed by the venom gland.

It is found in the secreted. In terms of biological role, probable neurotoxin that inhibits ion channels. Is toxic to mice. Is about 2.8% of the total protein in the venom. The polypeptide is Toxin Acra1 (Androctonus crassicauda (Arabian fat-tailed scorpion)).